The sequence spans 138 residues: Acidic phospholipase A2 Drk-a1 (138 aa).

A signal peptide spans 1–16 (MRTLWIVAVCLIGVEG). 7 disulfide bridges follow: C42–C131, C44–C60, C59–C111, C65–C138, C66–C104, C73–C97, and C91–C102. Residues Y43, G45, and G47 each coordinate Ca(2+). Residue H63 is part of the active site. Residue D64 participates in Ca(2+) binding. D105 is an active-site residue.

This sequence belongs to the phospholipase A2 family. Group II subfamily. D49 sub-subfamily. It depends on Ca(2+) as a cofactor. As to expression, expressed by the venom gland.

It localises to the secreted. It catalyses the reaction a 1,2-diacyl-sn-glycero-3-phosphocholine + H2O = a 1-acyl-sn-glycero-3-phosphocholine + a fatty acid + H(+). Its function is as follows. Snake venom phospholipase A2 (PLA2) that exhibits high hydrolytic activities and shows strong preference for the anionic micelles (dPPC with deoxycholate) to the zwitterionic micelles (dPPC with Triton X-100). PLA2 catalyzes the calcium-dependent hydrolysis of the 2-acyl groups in 3-sn-phosphoglycerides. This chain is Acidic phospholipase A2 Drk-a1, found in Daboia russelii (Russel's viper).